Consider the following 363-residue polypeptide: MKALILVGGFGTRLRPLTLTLPKPLVEFGNKPMILHQVEALAAAGVTDIVLAVNYRPEIMVEALKKYEKEYNVNITFSVENEPLGTAGPLALARDILAKDHSPFFVLNSDVICEYPFADLAAFHKAHGAEGTIVVTKVEEPSKYGVVVHYPNSESLIERFVEKPVEFVSNRINGGIYILNPSVLDRIEPRPTSIEKEVFPAMVNDKQLHSFDLEGYWMDVGQPKDYLTGTCLYLSSLRKHKPEILAPASSNIIGNVLIDPSATIGKNCKIGPNVVIGPNVTIGDGVRLQRCAILKSSRVRDHAWVKSSIVGWNSTLGSWSRLENVSVLGDDVVVNDEIYVNGGSILPHKSISANIEVPGTIVM.

This sequence belongs to the transferase hexapeptide repeat family.

The protein localises to the cytoplasm. The enzyme catalyses alpha-D-mannose 1-phosphate + GTP + H(+) = GDP-alpha-D-mannose + diphosphate. It participates in nucleotide-sugar biosynthesis; GDP-alpha-D-mannose biosynthesis; GDP-alpha-D-mannose from alpha-D-mannose 1-phosphate (GTP route): step 1/1. In terms of biological role, involved in cell wall synthesis where it is required for glycosylation. Involved in cell cycle progression through cell-size checkpoint. Required for the correct assembly of the septum. The sequence is that of Mannose-1-phosphate guanyltransferase (mpg1) from Schizosaccharomyces pombe (strain 972 / ATCC 24843) (Fission yeast).